We begin with the raw amino-acid sequence, 130 residues long: MVSPSLRVPFAVALGAIGGSLSRYYLSLWFAERFGPSFPYGTLIINLSGCVVMGWFMTVAMERPEISPEIRLLFGVGFLGSYTTFSTYELDTFSLWQQHRFATGLVYWLGSCLFGALAMELGILLARLWR.

4 consecutive transmembrane segments (helical) span residues 10-30 (FAVA…SLWF), 41-61 (GTLI…TVAM), 72-89 (LLFG…STYE), and 105-125 (LVYW…GILL). Na(+)-binding residues include glycine 80 and threonine 83.

This sequence belongs to the fluoride channel Fluc/FEX (TC 1.A.43) family.

The protein resides in the cell inner membrane. It carries out the reaction fluoride(in) = fluoride(out). Na(+) is not transported, but it plays an essential structural role and its presence is essential for fluoride channel function. Fluoride-specific ion channel. Important for reducing fluoride concentration in the cell, thus reducing its toxicity. This is Fluoride-specific ion channel FluC from Synechococcus sp. (strain JA-2-3B'a(2-13)) (Cyanobacteria bacterium Yellowstone B-Prime).